A 457-amino-acid polypeptide reads, in one-letter code: Multidrug resistance protein MdtK (457 aa).

Transmembrane regions (helical) follow at residues 11-31 (LLALAIPVIIAQVAQTSMGFV), 53-73 (IWLPAILFGHGLLLALTPVIA), 93-113 (WLAGFVSILIMVVLWNAGYII), 127-147 (AVGYLRALLWGAPGYLFFQVA), 160-180 (GMVMGFIGLLVNIPVNYIFIY), 189-209 (GGVGCGVATAAVYWVMFFSMI), 243-263 (LPIALALFFEVTLFAVVALLV), 276-296 (IALNFSSLMFVLPMSLAAAVT), 314-334 (AARTGLGVGVCMAFCTALFTV), 357-377 (LMLLAAIYQLSDSIQVIGSGI), 387-407 (IFFITFTAYWVLGLPTGYILA), and 418-438 (PAGFWMGFIIGLTSAAILMML).

This sequence belongs to the multi antimicrobial extrusion (MATE) (TC 2.A.66.1) family. MdtK subfamily.

Its subcellular location is the cell inner membrane. Its function is as follows. Multidrug efflux pump that functions probably as a Na(+)/drug antiporter. This is Multidrug resistance protein MdtK from Enterobacter sp. (strain 638).